The primary structure comprises 751 residues: NAD(P)H-quinone oxidoreductase subunit 5, chloroplastic (751 aa).

The next 16 helical transmembrane spans lie at 9–29 (WIIP…LIIF), 40–60 (WAFP…KLSI), 89–109 (VDPL…LVLI), 125–145 (FAYL…SNFI), 147–167 (IYIF…FWFT), 185–205 (GDFG…SFEF), 219–239 (NEVH…GAVA), 258–278 (TPIS…FLVA), 280–300 (LFPL…VGII), 327–347 (LGYM…FHLI), 354–374 (ALLF…VGYS), 396–416 (TAFL…CFWS), 425–445 (WLYS…TAFY), 543–563 (LFPL…GIPF), 599–619 (FLTN…LASF), and 719–739 (ISSY…IYYF).

Belongs to the complex I subunit 5 family. In terms of assembly, NDH is composed of at least 16 different subunits, 5 of which are encoded in the nucleus.

The protein resides in the plastid. The protein localises to the chloroplast thylakoid membrane. It carries out the reaction a plastoquinone + NADH + (n+1) H(+)(in) = a plastoquinol + NAD(+) + n H(+)(out). The catalysed reaction is a plastoquinone + NADPH + (n+1) H(+)(in) = a plastoquinol + NADP(+) + n H(+)(out). NDH shuttles electrons from NAD(P)H:plastoquinone, via FMN and iron-sulfur (Fe-S) centers, to quinones in the photosynthetic chain and possibly in a chloroplast respiratory chain. The immediate electron acceptor for the enzyme in this species is believed to be plastoquinone. Couples the redox reaction to proton translocation, and thus conserves the redox energy in a proton gradient. This is NAD(P)H-quinone oxidoreductase subunit 5, chloroplastic (ndhF) from Fagopyrum esculentum subsp. ancestrale (Wild buckwheat).